A 226-amino-acid chain; its full sequence is UPF0111 protein PH0637 (226 aa).

It belongs to the UPF0111 family.

This Pyrococcus horikoshii (strain ATCC 700860 / DSM 12428 / JCM 9974 / NBRC 100139 / OT-3) protein is UPF0111 protein PH0637.